The following is a 126-amino-acid chain: Small ribosomal subunit protein uS13 (126 aa).

The disordered stretch occupies residues 92–126 (RMGLPVRGQRTRTNARTRRGGRRTVAGKKKAPAKK). Basic residues predominate over residues 100–126 (QRTRTNARTRRGGRRTVAGKKKAPAKK).

It belongs to the universal ribosomal protein uS13 family. As to quaternary structure, part of the 30S ribosomal subunit. Forms a loose heterodimer with protein S19. Forms two bridges to the 50S subunit in the 70S ribosome.

Located at the top of the head of the 30S subunit, it contacts several helices of the 16S rRNA. In the 70S ribosome it contacts the 23S rRNA (bridge B1a) and protein L5 of the 50S subunit (bridge B1b), connecting the 2 subunits; these bridges are implicated in subunit movement. Contacts the tRNAs in the A and P-sites. The chain is Small ribosomal subunit protein uS13 from Cyanothece sp. (strain PCC 7425 / ATCC 29141).